The chain runs to 178 residues: Peptide deformylase (178 aa).

Cys-102 and His-144 together coordinate Fe cation. Glu-145 is a catalytic residue. Residue His-148 coordinates Fe cation.

It belongs to the polypeptide deformylase family. Requires Fe(2+) as cofactor.

The enzyme catalyses N-terminal N-formyl-L-methionyl-[peptide] + H2O = N-terminal L-methionyl-[peptide] + formate. Removes the formyl group from the N-terminal Met of newly synthesized proteins. Requires at least a dipeptide for an efficient rate of reaction. N-terminal L-methionine is a prerequisite for activity but the enzyme has broad specificity at other positions. The chain is Peptide deformylase from Leptospira interrogans serogroup Icterohaemorrhagiae serovar copenhageni (strain Fiocruz L1-130).